The primary structure comprises 417 residues: FAD-dependent monooxygenase aptC (417 aa).

Residues 1-18 (MTLPVLIIGAGLSGLTTA) form the signal peptide. The FAD site is built by Glu32, Ala43, Arg117, Asp332, and Gly345.

Belongs to the paxM FAD-dependent monooxygenase family. FAD serves as cofactor.

The enzyme catalyses 3,6,8,9-tetrahydroxy-1-oxo-3-(2-oxopropyl)-1,2,3,4-tetrahydroanthracene-2-carboxyl-[ACP] + NADPH + O2 + H(+) = 2,3,6,8,9-pentahydroxy-1-oxo-3-(2-oxopropyl)-1,2,3,4-tetrahydroanthracene-2-carboxyl-[ACP] + NADP(+) + H2O. It participates in secondary metabolite biosynthesis. Its function is as follows. FAD-dependent monooxygenase; part of the gene cluster that mediates the biosynthesis of asperthecin, an anthraquinone pigment. Polyketide synthase (PKS) aptA catalyzes the formation of the aromatic polyketide from acetyl coenzyme A and seven malonyl coenzyme A molecules. Polyketide is subsequently hydrolyzed by the action of the hydrolase aptB into endocrocin-9-anthrone. Endocrocin-9-anthrone is then oxidized into endocrocin by the monooxygenase aptC. Endocrocin is likely to decarboxylate spontaneously to form emodin which explains why there is no decarboxylase in the asperthecin biosynthesis cluster. Finally, aptC or another endogenous oxygenase catalyzes additional oxidation steps to form asperthecin. The polypeptide is FAD-dependent monooxygenase aptC (Emericella nidulans (strain FGSC A4 / ATCC 38163 / CBS 112.46 / NRRL 194 / M139) (Aspergillus nidulans)).